Here is a 1241-residue protein sequence, read N- to C-terminus: Plasma membrane calcium-transporting ATPase 4 (1241 aa).

Residues Met1 to Thr92 lie on the Cytoplasmic side of the membrane. Ser13 is subject to Phosphoserine. A helical membrane pass occupies residues Phe93–Ala113. The Extracellular portion of the chain corresponds to Ile114–Ile150. A helical membrane pass occupies residues Glu151 to Trp171. The Cytoplasmic segment spans residues Ser172–Leu356. The interval Glu294–Gly318 is disordered. At Ser328 the chain carries Phosphoserine. A helical transmembrane segment spans residues Thr357–Phe376. Residues Ile377–Phe409 are Extracellular-facing. A helical membrane pass occupies residues Phe410–Leu427. The Cytoplasmic portion of the chain corresponds to Ala428–Ile840. The active-site 4-aspartylphosphate intermediate is the Asp465. Asp785 and Asp789 together coordinate Mg(2+). The chain crosses the membrane as a helical span at residues Ser841–Thr860. Topologically, residues Gly861–Leu870 are extracellular. A helical membrane pass occupies residues Lys871–Ala891. Topologically, residues Thr892 to Leu911 are cytoplasmic. The helical transmembrane segment at Ile912 to Leu934 threads the bilayer. Residues Val935–Leu952 lie on the Extracellular side of the membrane. Residues His953–Asn974 traverse the membrane as a helical segment. The Cytoplasmic portion of the chain corresponds to Glu975–Arg993. Residues Asn994–Gly1015 traverse the membrane as a helical segment. Residues Gly1016–Ser1025 are Extracellular-facing. Residues Leu1026–Ser1047 traverse the membrane as a helical segment. The Cytoplasmic segment spans residues Ala1048–Val1241. Residues Leu1086–Gln1103 are calmodulin-binding subdomain A. Residue Thr1102 is modified to Phosphothreonine; by PKC. Residues Ile1104 to Gly1113 are calmodulin-binding subdomain B.

This sequence belongs to the cation transport ATPase (P-type) (TC 3.A.3) family. Type IIB subfamily. As to quaternary structure, interacts with PDZD11. Interacts with SLC35G1 and STIM1. Interacts with calmodulin. In terms of tissue distribution, isoform XB is the most abundant isoform and is expressed ubiquitously. Isoforms containing segment Z have only been detected in heart, while isoforms containing segment a have been found in heart, stomach and brain cortex.

It is found in the cell membrane. The protein resides in the cell projection. Its subcellular location is the cilium. The protein localises to the flagellum membrane. The enzyme catalyses Ca(2+)(in) + ATP + H2O = Ca(2+)(out) + ADP + phosphate + H(+). Its activity is regulated as follows. Activated by calcium/calmodulin. In terms of biological role, calcium/calmodulin-regulated and magnesium-dependent enzyme that catalyzes the hydrolysis of ATP coupled with the transport of calcium out of the cell. By regulating sperm cell calcium homeostasis, may play a role in sperm motility. The chain is Plasma membrane calcium-transporting ATPase 4 from Homo sapiens (Human).